Reading from the N-terminus, the 247-residue chain is Adenosylcobinamide-GDP ribazoletransferase (247 aa).

Transmembrane regions (helical) follow at residues Ile-31–Ile-51, Leu-55–Leu-75, Ile-109–Ile-129, Leu-135–Thr-155, Val-183–Ile-203, and Ala-227–Val-247.

This sequence belongs to the CobS family. The cofactor is Mg(2+).

Its subcellular location is the cell inner membrane. The enzyme catalyses alpha-ribazole + adenosylcob(III)inamide-GDP = adenosylcob(III)alamin + GMP + H(+). It carries out the reaction alpha-ribazole 5'-phosphate + adenosylcob(III)inamide-GDP = adenosylcob(III)alamin 5'-phosphate + GMP + H(+). It participates in cofactor biosynthesis; adenosylcobalamin biosynthesis; adenosylcobalamin from cob(II)yrinate a,c-diamide: step 7/7. Its function is as follows. Joins adenosylcobinamide-GDP and alpha-ribazole to generate adenosylcobalamin (Ado-cobalamin). Also synthesizes adenosylcobalamin 5'-phosphate from adenosylcobinamide-GDP and alpha-ribazole 5'-phosphate. In Acinetobacter baumannii (strain ACICU), this protein is Adenosylcobinamide-GDP ribazoletransferase.